The following is a 75-amino-acid chain: ATP synthase subunit c (75 aa).

2 helical membrane passes run 9–29 and 54–74; these read IGAGLAAIALAGAGVGIGIIF and FALAEATGLFGLVVALIILFA.

It belongs to the ATPase C chain family. As to quaternary structure, F-type ATPases have 2 components, F(1) - the catalytic core - and F(0) - the membrane proton channel. F(1) has five subunits: alpha(3), beta(3), gamma(1), delta(1), epsilon(1). F(0) has three main subunits: a(1), b(2) and c(10-14). The alpha and beta chains form an alternating ring which encloses part of the gamma chain. F(1) is attached to F(0) by a central stalk formed by the gamma and epsilon chains, while a peripheral stalk is formed by the delta and b chains.

The protein localises to the cell inner membrane. Its function is as follows. F(1)F(0) ATP synthase produces ATP from ADP in the presence of a proton or sodium gradient. F-type ATPases consist of two structural domains, F(1) containing the extramembraneous catalytic core and F(0) containing the membrane proton channel, linked together by a central stalk and a peripheral stalk. During catalysis, ATP synthesis in the catalytic domain of F(1) is coupled via a rotary mechanism of the central stalk subunits to proton translocation. Functionally, key component of the F(0) channel; it plays a direct role in translocation across the membrane. A homomeric c-ring of between 10-14 subunits forms the central stalk rotor element with the F(1) delta and epsilon subunits. The protein is ATP synthase subunit c of Pelagibacter ubique (strain HTCC1062).